We begin with the raw amino-acid sequence, 392 residues long: tRNA-specific 2-thiouridylase MnmA (392 aa).

ATP is bound by residues 18–25 (GMSGGVDS) and Met-44. Positions 104–106 (NPD) are interaction with target base in tRNA. The active-site Nucleophile is Cys-109. A disulfide bond links Cys-109 and Cys-208. Residue Gly-133 coordinates ATP. The tract at residues 158 to 160 (KDQ) is interaction with tRNA. Cys-208 (cysteine persulfide intermediate) is an active-site residue. Residues 320 to 321 (RY) form an interaction with tRNA region.

The protein belongs to the MnmA/TRMU family.

The protein resides in the cytoplasm. It catalyses the reaction S-sulfanyl-L-cysteinyl-[protein] + uridine(34) in tRNA + AH2 + ATP = 2-thiouridine(34) in tRNA + L-cysteinyl-[protein] + A + AMP + diphosphate + H(+). In terms of biological role, catalyzes the 2-thiolation of uridine at the wobble position (U34) of tRNA, leading to the formation of s(2)U34. The polypeptide is tRNA-specific 2-thiouridylase MnmA (Marinobacter nauticus (strain ATCC 700491 / DSM 11845 / VT8) (Marinobacter aquaeolei)).